We begin with the raw amino-acid sequence, 261 residues long: 5'-nucleotidase SurE (261 aa).

4 residues coordinate a divalent metal cation: Asp-8, Asp-9, Ser-43, and Asn-96.

It belongs to the SurE nucleotidase family. A divalent metal cation serves as cofactor.

It is found in the cytoplasm. The enzyme catalyses a ribonucleoside 5'-phosphate + H2O = a ribonucleoside + phosphate. In terms of biological role, nucleotidase that shows phosphatase activity on nucleoside 5'-monophosphates. This is 5'-nucleotidase SurE from Dinoroseobacter shibae (strain DSM 16493 / NCIMB 14021 / DFL 12).